We begin with the raw amino-acid sequence, 228 residues long: Ion-translocating oxidoreductase complex subunit G (228 aa).

A helical membrane pass occupies residues alanine 35 to leucine 55. FMN phosphoryl threonine is present on threonine 197.

This sequence belongs to the RnfG family. As to quaternary structure, the complex is composed of six subunits: RnfA, RnfB, RnfC, RnfD, RnfE and RnfG. The cofactor is FMN.

The protein resides in the cell inner membrane. Part of a membrane-bound complex that couples electron transfer with translocation of ions across the membrane. The polypeptide is Ion-translocating oxidoreductase complex subunit G (Stutzerimonas stutzeri (Pseudomonas stutzeri)).